The primary structure comprises 149 residues: CCAAT/enhancer-binding protein gamma (149 aa).

Residues 1–12 (MSKVSQQNSTPG) show a composition bias toward polar residues. Residues 1-92 (MSKVSQQNST…SKQKAQDTLQ (92 aa)) are disordered. A Glycyl lysine isopeptide (Lys-Gly) (interchain with G-Cter in SUMO2) cross-link involves residue K3. Low complexity predominate over residues 28–37 (LQQVPQLVPA). The segment covering 56–72 (SPMDRNSDEYRQRRERN) has biased composition (basic and acidic residues). The 64-residue stretch at 62–125 (SDEYRQRRER…SVLKDLFLEH (64 aa)) folds into the bZIP domain. The tract at residues 66–93 (RQRRERNNMAVKKSRLKSKQKAQDTLQR) is basic motif. The interval 97-118 (LKEENERLEAKIKLLTKELSVL) is leucine-zipper. Residues 128 to 149 (NLADNVQPSSTENTTNPDKAGQ) form a disordered region. Residues 131–149 (DNVQPSSTENTTNPDKAGQ) show a composition bias toward polar residues.

The protein belongs to the bZIP family. C/EBP subfamily. As to quaternary structure, binds DNA as a dimer and can form stable heterodimers with CEBPA and CEBPB. Interacts with ZNF638; this interaction increases transcriptional activation.

The protein resides in the nucleus. Its function is as follows. Transcription factor that binds to the promoter and the enhancer regions of target genes. Binds to the enhancer element PRE-I (positive regulatory element-I) of the IL-4 gene. Binds to the promoter and the enhancer of the immunoglobulin heavy chain. Binds to GPE1, a cis-acting element in the G-CSF gene promoter. The polypeptide is CCAAT/enhancer-binding protein gamma (CEBPG) (Bos taurus (Bovine)).